The chain runs to 122 residues: Small ribosomal subunit protein uS12c (122 aa).

The protein belongs to the universal ribosomal protein uS12 family. As to quaternary structure, part of the 30S ribosomal subunit.

It localises to the plastid. The protein localises to the chloroplast. Its function is as follows. With S4 and S5 plays an important role in translational accuracy. Located at the interface of the 30S and 50S subunits. This Chloranthus spicatus (Chulantree) protein is Small ribosomal subunit protein uS12c (rps12).